Here is a 177-residue protein sequence, read N- to C-terminus: O-acetyl-ADP-ribose deacetylase (177 aa).

In terms of domain architecture, Macro spans 1–175; that stretch reads MKTRIHVVQG…LYERLLTQQG (175 aa). Substrate contacts are provided by residues 11–12, Asn25, 33–35, and 122–126; these read DI, GVD, and STGVY. The active-site Proton acceptor is the Asp35.

This sequence belongs to the MacroD-type family. YmdB subfamily. In terms of assembly, homodimer. Interacts with RNase III.

It carries out the reaction 3''-O-acetyl-ADP-D-ribose + H2O = ADP-D-ribose + acetate + H(+). The catalysed reaction is 2''-O-acetyl-ADP-D-ribose + H2O = ADP-D-ribose + acetate + H(+). Its function is as follows. Deacetylates O-acetyl-ADP ribose to yield ADP-ribose and free acetate. Down-regulates ribonuclease 3 (RNase III) activity. Acts by interacting directly with the region of the ribonuclease that is required for dimerization/activation. This Shigella dysenteriae serotype 1 (strain Sd197) protein is O-acetyl-ADP-ribose deacetylase.